The sequence spans 690 residues: Protein arginine N-methyltransferase 7 (690 aa).

SAM-dependent MTase PRMT-type domains are found at residues 14 to 357 (QNSW…YSLW) and 366 to 690 (TKSV…QKKL).

This sequence belongs to the class I-like SAM-binding methyltransferase superfamily. Protein arginine N-methyltransferase family. PRMT7 subfamily.

Essential arginine methyltransferase that can both catalyze the formation of omega-N monomethylarginine (MMA) and symmetrical dimethylarginine (sDMA). Specifically mediates the symmetrical dimethylation of arginine residues in the small nuclear ribonucleoproteins SmD1 and SmD3. This chain is Protein arginine N-methyltransferase 7 (Art7), found in Drosophila sechellia (Fruit fly).